We begin with the raw amino-acid sequence, 87 residues long: Cell division topological specificity factor (87 aa).

The protein belongs to the MinE family.

Functionally, prevents the cell division inhibition by proteins MinC and MinD at internal division sites while permitting inhibition at polar sites. This ensures cell division at the proper site by restricting the formation of a division septum at the midpoint of the long axis of the cell. The polypeptide is Cell division topological specificity factor (Clostridium botulinum (strain ATCC 19397 / Type A)).